The sequence spans 291 residues: MNSILDRNVRSSETTLIKPESEFDNWLSDENDGASHINVNKDSSSVLSASSSTWFEPLENIISSASSSSIGSPIEDQFISSNNEESALFPTDQFFSNPSSYSHSPEVSSSIKREEDDNALSLADFEPASLQLMPNMINTDNNDDSTPLKNEIELNDSFIKTNLDAKETKKRAPRKRLTPFQKQAHNKIEKRYRININTKIARLQQIIPWVASEQTAFEVGDSVKKQDEDGAETAATTPLPSAAATSTKLNKSMILEKAVDYILYLQNNERLYEMEVQRLKSEIDTLKQDQK.

The disordered stretch occupies residues 89-109 (FPTDQFFSNPSSYSHSPEVSS). The span at 96–109 (SNPSSYSHSPEVSS) shows a compositional bias: low complexity. Position 104 is a phosphoserine (S104). Positions 180–265 (FQKQAHNKIE…EKAVDYILYL (86 aa)) constitute a bHLH domain. DNA-binding residues include H185, E189, and R193. The disordered stretch occupies residues 221-245 (DSVKKQDEDGAETAATTPLPSAAAT). Residues 233–245 (TAATTPLPSAAAT) are compositionally biased toward low complexity. Residue T237 is modified to Phosphothreonine.

In terms of assembly, homodimer. Efficient DNA binding requires dimerization with another bHLH protein.

Its subcellular location is the nucleus. In terms of biological role, transcriptional activator of glycolytic gene expression, such as enolase genes (ENO1 and ENO2), glyceraldehyde-3-phosphate dehydrogenase gene (TDH), phosphoglycerate kinase (PGK1), phosphoglycerate mutase (PGM1), pyruvate kinase (PYK1) and triosephosphate isomerase (TPI1) genes. Binds DNA on E-box motifs: 5'-CANNTG-3'. In response to adenylic nucleotide reduction, activates Ty1 mRNA transcription, possibly by controlling Ty1 antisense transcription. Acts as a cell cycle transcription factor. Its function may also be linked to sulfur metabolism and the cross-regulation between phosphate and sulfate metabolism. The polypeptide is Transcription factor TYE7 (Saccharomyces cerevisiae (strain ATCC 204508 / S288c) (Baker's yeast)).